The following is a 276-amino-acid chain: NAD kinase (276 aa).

Asp-67 serves as the catalytic Proton acceptor. NAD(+) is bound by residues Asp-67–Gly-68, Arg-72, Asn-136–Asp-137, Lys-147, Arg-164, Asp-166, Thr-177–Ser-182, Ala-201, and Gln-235.

It belongs to the NAD kinase family. A divalent metal cation is required as a cofactor.

Its subcellular location is the cytoplasm. It carries out the reaction NAD(+) + ATP = ADP + NADP(+) + H(+). In terms of biological role, involved in the regulation of the intracellular balance of NAD and NADP, and is a key enzyme in the biosynthesis of NADP. Catalyzes specifically the phosphorylation on 2'-hydroxyl of the adenosine moiety of NAD to yield NADP. The protein is NAD kinase of Thermococcus sibiricus (strain DSM 12597 / MM 739).